The primary structure comprises 243 residues: Pyridoxine 5'-phosphate synthase (243 aa).

Asn-9 serves as a coordination point for 3-amino-2-oxopropyl phosphate. 1-deoxy-D-xylulose 5-phosphate is bound at residue Asp-11–His-12. Position 20 (Arg-20) interacts with 3-amino-2-oxopropyl phosphate. Catalysis depends on His-45, which acts as the Proton acceptor. Residues Arg-47 and His-52 each coordinate 1-deoxy-D-xylulose 5-phosphate. Glu-72 acts as the Proton acceptor in catalysis. Position 102 (Thr-102) interacts with 1-deoxy-D-xylulose 5-phosphate. The active-site Proton donor is His-193. Residues Gly-194 and Gly-215–His-216 contribute to the 3-amino-2-oxopropyl phosphate site.

This sequence belongs to the PNP synthase family. In terms of assembly, homooctamer; tetramer of dimers.

Its subcellular location is the cytoplasm. The catalysed reaction is 3-amino-2-oxopropyl phosphate + 1-deoxy-D-xylulose 5-phosphate = pyridoxine 5'-phosphate + phosphate + 2 H2O + H(+). The protein operates within cofactor biosynthesis; pyridoxine 5'-phosphate biosynthesis; pyridoxine 5'-phosphate from D-erythrose 4-phosphate: step 5/5. Functionally, catalyzes the complicated ring closure reaction between the two acyclic compounds 1-deoxy-D-xylulose-5-phosphate (DXP) and 3-amino-2-oxopropyl phosphate (1-amino-acetone-3-phosphate or AAP) to form pyridoxine 5'-phosphate (PNP) and inorganic phosphate. The polypeptide is Pyridoxine 5'-phosphate synthase (Aliivibrio fischeri (strain ATCC 700601 / ES114) (Vibrio fischeri)).